The chain runs to 250 residues: 2-(R)-hydroxypropyl-CoM dehydrogenase (250 aa).

NAD(+) contacts are provided by residues 12–14 (SGN), Asp33, 60–61 (DV), and Asn87. Arg152 lines the 2-oxopropyl-coenzyme M pocket. Residue Tyr155 is the Proton acceptor of the active site. 188 to 192 (IETPM) serves as a coordination point for NAD(+). 195 to 196 (WR) is a binding site for 2-oxopropyl-coenzyme M.

The protein belongs to the short-chain dehydrogenases/reductases (SDR) family. In terms of assembly, homodimer in solution. Homotetramer. Component III of the aliphatic epoxide carboxylation complex together with components I, II and IV.

The catalysed reaction is (R)-2-hydroxypropyl-coenzyme M + NAD(+) = 2-oxopropyl-coenzyme M + NADH + H(+). Its pathway is alkene metabolism; propylene degradation. With respect to regulation, inhibited by the arginine-specific modifiers 2,3-butanedione and phenylglyoxal. 2-(2-methyl-2-hydroxypropylthio)ethanesulfonate (M-HPC), an achiral analog of both R-HPC and S-HPC, and (2S)-2-hydroxypropyl-coenzyme M (S-HPC) are competitive inhibitors. Inhibited (at 70%) by the coenzyme M analog 2-bromoethanesulfonate (BES). In terms of biological role, involved in aliphatic epoxide carboxylation. Catalyzes the reversible oxidation of (R)-2-hydroxypropyl-coenzyme M (R-HPC) to 2-oxopropyl-coenzyme M (2-KPC). The enzyme is highly specific for the R enantiomers. In vitro can also use achiral 2-propanol and short-chain (R)- and (S)-2-alkanols. This is 2-(R)-hydroxypropyl-CoM dehydrogenase from Xanthobacter autotrophicus (strain ATCC BAA-1158 / Py2).